The sequence spans 175 residues: Respiratory supercomplex factor 1-B, mitochondrial (175 aa).

Residues 3–94 (DQADVLADPD…TERKQRREFE (92 aa)) form the HIG1 domain. Transmembrane regions (helical) follow at residues 30-46 (PLIP…LYRA) and 66-83 (IYAQ…GMYY). A coiled-coil region spans residues 83–115 (YKTERKQRREFEKKVEERKAQEKRDAWLRELEA).

It belongs to the RCF1 family. In terms of assembly, associates with the respiratory chain complex III/complex IV supercomplex.

The protein resides in the mitochondrion membrane. In terms of biological role, cytochrome c oxidase subunit which plays a role in assembly of respiratory supercomplexes. In Talaromyces marneffei (strain ATCC 18224 / CBS 334.59 / QM 7333) (Penicillium marneffei), this protein is Respiratory supercomplex factor 1-B, mitochondrial (rcf1-B).